Reading from the N-terminus, the 378-residue chain is Ribosomal RNA large subunit methyltransferase G (378 aa).

This sequence belongs to the methyltransferase superfamily. RlmG family.

The protein localises to the cytoplasm. The catalysed reaction is guanosine(1835) in 23S rRNA + S-adenosyl-L-methionine = N(2)-methylguanosine(1835) in 23S rRNA + S-adenosyl-L-homocysteine + H(+). Specifically methylates the guanine in position 1835 (m2G1835) of 23S rRNA. This chain is Ribosomal RNA large subunit methyltransferase G, found in Shewanella putrefaciens (strain CN-32 / ATCC BAA-453).